The following is an 88-amino-acid chain: Phosphocarrier protein HPr (88 aa).

The HPr domain maps to 1-88; the sequence is MEKREFNIIA…DTMKKEGLAE (88 aa). Catalysis depends on histidine 15, which acts as the Pros-phosphohistidine intermediate. The residue at position 46 (serine 46) is a Phosphoserine; by HPrK/P.

Belongs to the HPr family.

It is found in the cytoplasm. Phosphorylation on Ser-46 inhibits the phosphoryl transfer from enzyme I to HPr. General (non sugar-specific) component of the phosphoenolpyruvate-dependent sugar phosphotransferase system (sugar PTS). This major carbohydrate active-transport system catalyzes the phosphorylation of incoming sugar substrates concomitantly with their translocation across the cell membrane. The phosphoryl group from phosphoenolpyruvate (PEP) is transferred to the phosphoryl carrier protein HPr by enzyme I. Phospho-HPr then transfers it to the PTS EIIA domain. Its function is as follows. P-Ser-HPr interacts with the catabolite control protein A (CcpA), forming a complex that binds to DNA at the catabolite response elements cre, operator sites preceding a large number of catabolite-regulated genes. Thus, P-Ser-HPr is a corepressor in carbon catabolite repression (CCR), a mechanism that allows bacteria to coordinate and optimize the utilization of available carbon sources. P-Ser-HPr also plays a role in inducer exclusion, in which it probably interacts with several non-PTS permeases and inhibits their transport activity. The chain is Phosphocarrier protein HPr (ptsH) from Lacticaseibacillus casei (Lactobacillus casei).